The following is a 449-amino-acid chain: Exodeoxyribonuclease 7 large subunit (449 aa).

It belongs to the XseA family. In terms of assembly, heterooligomer composed of large and small subunits.

It localises to the cytoplasm. It catalyses the reaction Exonucleolytic cleavage in either 5'- to 3'- or 3'- to 5'-direction to yield nucleoside 5'-phosphates.. In terms of biological role, bidirectionally degrades single-stranded DNA into large acid-insoluble oligonucleotides, which are then degraded further into small acid-soluble oligonucleotides. The protein is Exodeoxyribonuclease 7 large subunit of Salmonella typhi.